The following is a 196-amino-acid chain: Na(+)-translocating ferredoxin:NAD(+) oxidoreductase complex subunit E (196 aa).

Transmembrane regions (helical) follow at residues 38-58 (MGMG…ISAL), 68-88 (IPAF…LMKA), 92-112 (ALDA…IILA), 127-147 (FADA…LGSI), and 169-189 (VLLM…IGLI).

Belongs to the NqrDE/RnfAE family. In terms of assembly, the complex is composed of six subunits: RnfA, RnfB, RnfC, RnfD, RnfE and RnfG.

It is found in the cell membrane. The catalysed reaction is 2 reduced [2Fe-2S]-[ferredoxin] + Na(+)(in) + NAD(+) + H(+) = 2 oxidized [2Fe-2S]-[ferredoxin] + Na(+)(out) + NADH. In terms of biological role, part of a membrane-bound complex that couples electron transfer with translocation of ions across the membrane. Couples electron transfer from reduced ferredoxin to NAD(+) with electrogenic movement of Na(+) out of the cell. Involved in caffeate respiration. This chain is Na(+)-translocating ferredoxin:NAD(+) oxidoreductase complex subunit E, found in Acetobacterium woodii (strain ATCC 29683 / DSM 1030 / JCM 2381 / KCTC 1655 / WB1).